We begin with the raw amino-acid sequence, 188 residues long: Threonylcarbamoyl-AMP synthase (188 aa).

The 186-residue stretch at 3-188 (QLHPSEIKDI…RSGKILRNGQ (186 aa)) folds into the YrdC-like domain.

Belongs to the SUA5 family. TsaC subfamily.

It is found in the cytoplasm. It catalyses the reaction L-threonine + hydrogencarbonate + ATP = L-threonylcarbamoyladenylate + diphosphate + H2O. Functionally, required for the formation of a threonylcarbamoyl group on adenosine at position 37 (t(6)A37) in tRNAs that read codons beginning with adenine. Catalyzes the conversion of L-threonine, HCO(3)(-)/CO(2) and ATP to give threonylcarbamoyl-AMP (TC-AMP) as the acyladenylate intermediate, with the release of diphosphate. The chain is Threonylcarbamoyl-AMP synthase from Shewanella sp. (strain MR-4).